The following is a 624-amino-acid chain: Aliphatic sulfonate oxidoreductase, WOR-like subunit (624 aa).

Tungstopterin contacts are provided by Lys77, Ser93, Val94, Ser96, His195, Ala196, Gly198, and Tyr199. Asp299, Cys302, and Cys306 together coordinate [4Fe-4S] cluster. Tungstopterin-binding residues include Asp353, Leu357, Asp358, Gly359, Thr470, Asp490, Ile494, Cys495, and Asn496. A [4Fe-4S] cluster-binding site is contributed by Cys495. The segment at 552–575 (KDDDNPPRFYEPLPSGPVKGKAPN) is disordered.

It belongs to the AOR/FOR family. Heterodimer composed of a small WOR5-S subunit, with four [4Fe-4S] clusters, and a large WOR5-L subunit, containing the active site tungsto-bispyranopterin cofactor as well as another [4Fe-4S] cluster. Requires [4Fe-4S] cluster as cofactor. Tungstopterin serves as cofactor.

Its subcellular location is the cytoplasm. It catalyses the reaction an aliphatic sulfonate + 4 oxidized [4Fe-4S]-[ferredoxin] + 2 H2O = 4 reduced [4Fe-4S]-[ferredoxin] + a carboxylate + sulfite + 6 H(+). It carries out the reaction an aliphatic sulfonate + 2 oxidized [4Fe-4S]-[ferredoxin] + H2O = 2 reduced [4Fe-4S]-[ferredoxin] + an aldehyde + sulfite + 3 H(+). The enzyme catalyses 2 oxidized [4Fe-4S]-[ferredoxin] + an aldehyde + H2O = 2 reduced [4Fe-4S]-[ferredoxin] + a carboxylate + 3 H(+). The catalysed reaction is 4 oxidized [4Fe-4S]-[ferredoxin] + taurine + 2 H2O = 4 reduced [4Fe-4S]-[ferredoxin] + sulfite + glycine + 6 H(+). It catalyses the reaction 2 oxidized [4Fe-4S]-[ferredoxin] + taurine + H2O = aminoacetaldehyde + 2 reduced [4Fe-4S]-[ferredoxin] + sulfite + 3 H(+). It carries out the reaction aminoacetaldehyde + 2 oxidized [4Fe-4S]-[ferredoxin] + H2O = 2 reduced [4Fe-4S]-[ferredoxin] + glycine + 3 H(+). WOR-like catalytic subunit of an oxidoreductase that can desulfonate and oxidize aliphatic sulfonates such as taurine. The activity involves two steps: an oxidative desulfonation reaction, followed by the activation of a second water molecule and oxidation of the resulting aldehyde. May be involved in the oxidation of various aliphatic sulfonates and also phosphonates. In vitro, has a broad substrate specificity with a high affinity for several substituted and nonsubstituted aliphatic and aromatic aldehydes with various chain lengths, with methyl viologen or benzyl viologen as electron acceptor. Ferredoxin is the physiological electron acceptor. The sequence is that of Aliphatic sulfonate oxidoreductase, WOR-like subunit from Pyrococcus furiosus (strain ATCC 43587 / DSM 3638 / JCM 8422 / Vc1).